The sequence spans 121 residues: Large ribosomal subunit protein bL20 (121 aa).

This sequence belongs to the bacterial ribosomal protein bL20 family.

Binds directly to 23S ribosomal RNA and is necessary for the in vitro assembly process of the 50S ribosomal subunit. It is not involved in the protein synthesizing functions of that subunit. In Chlamydia pneumoniae (Chlamydophila pneumoniae), this protein is Large ribosomal subunit protein bL20 (rplT).